A 562-amino-acid polypeptide reads, in one-letter code: Nicotinate phosphoribosyltransferase (562 aa).

Tyrosine 36, phenylalanine 183, and threonine 225 together coordinate nicotinate. At histidine 228 the chain carries Phosphohistidine. Threonine 397 contributes to the 5-phospho-alpha-D-ribose 1-diphosphate binding site.

It belongs to the NAPRTase family. Mg(2+) serves as cofactor. Requires Mn(2+) as cofactor. In terms of processing, transiently phosphorylated on a His residue during the reaction cycle. Phosphorylation strongly increases the affinity for substrates and increases the rate of nicotinate D-ribonucleotide production. Dephosphorylation regenerates the low-affinity form of the enzyme, leading to product release.

It carries out the reaction nicotinate + 5-phospho-alpha-D-ribose 1-diphosphate + ATP + H2O = nicotinate beta-D-ribonucleotide + ADP + phosphate + diphosphate. It participates in cofactor biosynthesis; NAD(+) biosynthesis; nicotinate D-ribonucleotide from nicotinate: step 1/1. Its function is as follows. Catalyzes the first step in the biosynthesis of NAD from nicotinic acid, the ATP-dependent synthesis of beta-nicotinate D-ribonucleotide from nicotinate and 5-phospho-D-ribose 1-phosphate. Helps prevent cellular oxidative stress via its role in NAD biosynthesis. This is Nicotinate phosphoribosyltransferase from Caenorhabditis elegans.